The sequence spans 647 residues: Endogenous retrovirus group K member 8 Gag polyprotein (647 aa).

The N-myristoyl glycine moiety is linked to residue Gly2. The tract at residues 165–264 is disordered; it reads GKGPELVGPS…APPSRQGSEL (100 aa). The segment covering 232 to 247 has biased composition (pro residues); the sequence is GMPPAPQGREPYPQPP. CCHC-type zinc fingers lie at residues 544–561 and 580–597; these read GKCY…NCPV and DLCP…QCRS. A disordered region spans residues 598–641; it reads KFDKNGQPLSGNEQRGQPQAPQQTGAFPIQPFVPQGFQDNNPHC. The segment covering 604 to 622 has biased composition (polar residues); it reads QPLSGNEQRGQPQAPQQTG.

Belongs to the beta type-B retroviral Gag protein family. HERV class-II K(HML-2) gag subfamily. Post-translationally, myristoylation is essential for retroviral assembly. Alteration of the glycine residue leads to a block in the budding of particles and an accumulation of Gag inside the cell. Specific enzymatic cleavages may yield mature proteins.

The protein resides in the cell membrane. Its function is as follows. The products of the Gag polyproteins of infectious retroviruses perform highly complex orchestrated tasks during the assembly, budding, maturation, and infection stages of the viral replication cycle. During viral assembly, the proteins form membrane associations and self-associations that ultimately result in budding of an immature virion from the infected cell. Gag precursors also function during viral assembly to selectively bind and package two plus strands of genomic RNA. Endogenous Gag proteins may have kept, lost or modified their original function during evolution. The polypeptide is Endogenous retrovirus group K member 8 Gag polyprotein (ERVK-8) (Homo sapiens (Human)).